The chain runs to 306 residues: Anamorsin homolog (306 aa).

Residues 1-25 (MVPPREDVTVRIVCERRRTAGKEAR) are compositionally biased toward basic and acidic residues. Positions 1-51 (MVPPREDVTVRIVCERRRTAGKEARPPPSAKPTPGNTSSHPNAKETHRSNE) are disordered. Residues 59–190 (KQSHRRSIMA…RRNNTTNSVA (132 aa)) are N-terminal SAM-like domain. The segment at 191-218 (TLNFASNNNNGNDLLIDEDNLLTDASNL) is linker. [2Fe-2S] cluster-binding residues include C236, C242, C245, and C247. Residues 236–247 (CSGRAPCDDCTC) are fe-S binding site A. Residues 252–265 (GAKEGNSEQPKEIK) show a composition bias toward basic and acidic residues. Residues 252 to 272 (GAKEGNSEQPKEIKSSSCGKC) are disordered. C269, C272, C280, and C283 together coordinate [4Fe-4S] cluster. Short sequence motifs (cx2C motif) lie at residues 269–272 (CGKC) and 280–283 (CASC). Positions 269 to 283 (CGKCSLGDAFRCASC) are fe-S binding site B.

This sequence belongs to the anamorsin family. As to quaternary structure, monomer. [2Fe-2S] cluster serves as cofactor. [4Fe-4S] cluster is required as a cofactor.

The protein localises to the cytoplasm. Its subcellular location is the mitochondrion intermembrane space. Component of the cytosolic iron-sulfur (Fe-S) protein assembly (CIA) machinery. Required for the maturation of extramitochondrial Fe-S proteins. Part of an electron transfer chain functioning in an early step of cytosolic Fe-S biogenesis, facilitating the de novo assembly of a [4Fe-4S] cluster on the cytosolic Fe-S scaffold complex. Electrons are transferred from NADPH via a FAD- and FMN-containing diflavin oxidoreductase. Together with the diflavin oxidoreductase, also required for the assembly of the diferric tyrosyl radical cofactor of ribonucleotide reductase (RNR), probably by providing electrons for reduction during radical cofactor maturation in the catalytic small subunit. The protein is Anamorsin homolog of Phaeodactylum tricornutum (strain CCAP 1055/1).